The sequence spans 92 residues: Exodeoxyribonuclease 7 small subunit (92 aa).

The span at 71–84 (AESAGTAKSAVAAD) shows a compositional bias: low complexity. A disordered region spans residues 71 to 92 (AESAGTAKSAVAADSRGAADSA).

This sequence belongs to the XseB family. As to quaternary structure, heterooligomer composed of large and small subunits.

The protein localises to the cytoplasm. The catalysed reaction is Exonucleolytic cleavage in either 5'- to 3'- or 3'- to 5'-direction to yield nucleoside 5'-phosphates.. Its function is as follows. Bidirectionally degrades single-stranded DNA into large acid-insoluble oligonucleotides, which are then degraded further into small acid-soluble oligonucleotides. This chain is Exodeoxyribonuclease 7 small subunit, found in Leifsonia xyli subsp. xyli (strain CTCB07).